Here is a 659-residue protein sequence, read N- to C-terminus: Mannosyl-oligosaccharide 1,2-alpha-mannosidase IA (659 aa).

Residues methionine 1 to lysine 48 lie on the Cytoplasmic side of the membrane. Residues phenylalanine 49 to leucine 69 form a helical; Signal-anchor for type II membrane protein membrane-spanning segment. The Lumenal segment spans residues proline 70 to lysine 659. Residues glutamine 88–alanine 121 form a disordered region. Over residues alanine 91–glutamate 113 the composition is skewed to basic and acidic residues. An intrachain disulfide couples cysteine 482 to cysteine 514. Glutamate 528 (proton donor) is an active-site residue. Threonine 639 provides a ligand contact to Ca(2+).

This sequence belongs to the glycosyl hydrolase 47 family. Requires Ca(2+) as cofactor.

It localises to the endoplasmic reticulum membrane. It carries out the reaction N(4)-(alpha-D-Man-(1-&gt;2)-alpha-D-Man-(1-&gt;2)-alpha-D-Man-(1-&gt;3)-[alpha-D-Man-(1-&gt;2)-alpha-D-Man-(1-&gt;3)-[alpha-D-Man-(1-&gt;2)-alpha-D-Man-(1-&gt;6)]-alpha-D-Man-(1-&gt;6)]-beta-D-Man-(1-&gt;4)-beta-D-GlcNAc-(1-&gt;4)-beta-D-GlcNAc)-L-asparaginyl-[protein] (N-glucan mannose isomer 9A1,2,3B1,2,3) + 4 H2O = N(4)-(alpha-D-Man-(1-&gt;3)-[alpha-D-Man-(1-&gt;3)-[alpha-D-Man-(1-&gt;6)]-alpha-D-Man-(1-&gt;6)]-beta-D-Man-(1-&gt;4)-beta-D-GlcNAc-(1-&gt;4)-beta-D-GlcNAc)-L-asparaginyl-[protein] (N-glucan mannose isomer 5A1,2) + 4 beta-D-mannose. The enzyme catalyses N(4)-(alpha-D-Man-(1-&gt;2)-alpha-D-Man-(1-&gt;2)-alpha-D-Man-(1-&gt;3)-[alpha-D-Man-(1-&gt;3)-[alpha-D-Man-(1-&gt;2)-alpha-D-Man-(1-&gt;6)]-alpha-D-Man-(1-&gt;6)]-beta-D-Man-(1-&gt;4)-beta-D-GlcNAc-(1-&gt;4)-beta-D-GlcNAc)-L-asparaginyl-[protein] (N-glucan mannose isomer 8A1,2,3B1,3) + 3 H2O = N(4)-(alpha-D-Man-(1-&gt;3)-[alpha-D-Man-(1-&gt;3)-[alpha-D-Man-(1-&gt;6)]-alpha-D-Man-(1-&gt;6)]-beta-D-Man-(1-&gt;4)-beta-D-GlcNAc-(1-&gt;4)-beta-D-GlcNAc)-L-asparaginyl-[protein] (N-glucan mannose isomer 5A1,2) + 3 beta-D-mannose. It participates in protein modification; protein glycosylation. With respect to regulation, inhibited by both 1-deoxymannojirimycin and kifunensine. Involved in the maturation of Asn-linked oligosaccharides. Progressively trim alpha-1,2-linked mannose residues from Man(9)GlcNAc(2) to produce Man(5)GlcNAc(2). In Sus scrofa (Pig), this protein is Mannosyl-oligosaccharide 1,2-alpha-mannosidase IA (MAN1A1).